We begin with the raw amino-acid sequence, 92 residues long: Small ribosomal subunit protein uS19c (92 aa).

The protein belongs to the universal ribosomal protein uS19 family.

It localises to the plastid. Its subcellular location is the chloroplast. Its function is as follows. Protein S19 forms a complex with S13 that binds strongly to the 16S ribosomal RNA. The sequence is that of Small ribosomal subunit protein uS19c from Oltmannsiellopsis viridis (Marine flagellate).